Here is a 254-residue protein sequence, read N- to C-terminus: 3-deoxy-manno-octulosonate cytidylyltransferase (254 aa).

Belongs to the KdsB family.

The protein localises to the cytoplasm. The catalysed reaction is 3-deoxy-alpha-D-manno-oct-2-ulosonate + CTP = CMP-3-deoxy-beta-D-manno-octulosonate + diphosphate. It functions in the pathway nucleotide-sugar biosynthesis; CMP-3-deoxy-D-manno-octulosonate biosynthesis; CMP-3-deoxy-D-manno-octulosonate from 3-deoxy-D-manno-octulosonate and CTP: step 1/1. The protein operates within bacterial outer membrane biogenesis; lipopolysaccharide biosynthesis. Activates KDO (a required 8-carbon sugar) for incorporation into bacterial lipopolysaccharide in Gram-negative bacteria. The chain is 3-deoxy-manno-octulosonate cytidylyltransferase from Porphyromonas gingivalis (strain ATCC BAA-308 / W83).